The sequence spans 463 residues: Quinolone resistance protein NorB (463 aa).

14 consecutive transmembrane segments (helical) span residues 17-37, 53-73, 86-106, 107-127, 142-162, 165-185, 201-221, 230-250, 273-293, 299-319, 334-354, 357-377, 403-423, and 435-455; these read IGIV…VNVV, IAVS…GGLA, IILN…LLLI, IGRL…LSII, YWSI…GAVA, LGWR…LFLI, FDIK…ILIT, SLLF…FIVL, TASN…NTFV, YSSL…LIMI, PMLI…LTFL, IFYV…LGIY, MASA…YAIV, and IALW…LLLV.

This sequence belongs to the major facilitator superfamily. TCR/Tet family.

It localises to the cell membrane. Multidrug efflux pump that acts independently of NorA and is one of the factors that confers resistance against diverse quinolones and chemical compounds. This Staphylococcus aureus (strain USA300) protein is Quinolone resistance protein NorB (norB).